We begin with the raw amino-acid sequence, 762 residues long: MRFNQYSYAKTKRENMLIELAELGFFYDSNRSDKENLEDFLRTSFFTYKNTDYPLKSWAADSQTDLLSFFQSDRELTASVFYTVAFQLLEFSPFIDFTDVEAFRQETDFPITFGDLLENLYQLLNTRTKNGNLLIDKLVSEGLIPEDNTHHCFNGKSLATFSSHDAIREVVYVESRVDTDQDGRPDLIKVSIIRPRYQGPVPAVMTASPYHQGTNDPASDKALHDMNVDLAKKEPHQITVQDPELKLLQLDSPVPAQEVSETEEKLGHIGTYTLNDYLLPRGFANLYVSGVGTKDSEGLMTSGDYQQIEAYKNVIDWLNGRCRAFTDHTRQREIKATWSNGKVATTGISYLGTMSNGLATTGVDGLEVIIAEAGISSWYNYYRENGLVTSPGGYPGEDFESLTELTYSRNLRAGDYLRNNDAYQQNLEQQRKDLDRQTGDYNQFWHDRNYLLHADKVKAEVVFTHGSQDWNVKPLHVYNMFRALPPHIKKHLFFHNGAHVYMNNWQSIDFRESINALLSKKLLGCESDFVLPAVIWQDNSQAQSWLTLEDFGGQEQNLHLQLGQDCQSIQNQYSEEDYNRFAKNYQSFKTELFDGKVNQITLDWTLEKDLFLNGATQLNLRLKSSTDKGLISAQLLDFGLAKRHTPIPTPIEPRVMDNGRYYMLDNLVELPFAETPHRVITKGFLNLQNRTNLLSVEEVTPDQWLEFSFELQPTIYKMKKGDQLRLVLYTTDFEHTVRDKIDYQLTVDLEQSSLDLPTMTSH.

Catalysis depends on charge relay system residues S349, D469, and H499.

This sequence belongs to the peptidase S15 family. As to quaternary structure, homodimer.

It localises to the cytoplasm. It catalyses the reaction Hydrolyzes Xaa-Pro-|- bonds to release unblocked, N-terminal dipeptides from substrates including Ala-Pro-|-p-nitroanilide and (sequentially) Tyr-Pro-|-Phe-Pro-|-Gly-Pro-|-Ile.. Removes N-terminal dipeptides sequentially from polypeptides having unsubstituted N-termini provided that the penultimate residue is proline. This chain is Xaa-Pro dipeptidyl-peptidase, found in Streptococcus sanguinis (strain SK36).